The following is an 85-amino-acid chain: Beta-insect depressant toxin Lqh-dprIT3g (85 aa).

The signal sequence occupies residues 1–21 (MKLLLLLTISASMLIEGLVNA). The 61-residue stretch at 22–82 (DGYIRGGDGC…EWDYETDTCG (61 aa)) folds into the LCN-type CS-alpha/beta domain. Cystine bridges form between Cys-31-Cys-81, Cys-35-Cys-56, Cys-42-Cys-63, and Cys-46-Cys-65. Glycine amide is present on Gly-82.

This sequence belongs to the long (4 C-C) scorpion toxin superfamily. Sodium channel inhibitor family. Beta subfamily. As to expression, expressed by the venom gland.

The protein localises to the secreted. Its function is as follows. Depressant insect beta-toxins cause a transient contraction paralysis followed by a slow flaccid paralysis. They bind voltage-independently at site-4 of sodium channels (Nav) and block action potentials, primarily by depolarizing the axonal membrane and suppressing the sodium current. This depressant toxin is active only on insects. It is found in a relatively small amount in the venom. This is Beta-insect depressant toxin Lqh-dprIT3g from Leiurus hebraeus (Hebrew deathstalker scorpion).